The sequence spans 650 residues: MSSQSLYKVSGNIAANALVNNDQYKTMYQESIVNPEGFWREHGKRIDWIKPYTKIKKTTFDDHNLSINWFYDGTLNASANCLDRHLAAHSDRVAIIWEGDNANEQRKITYGELHTQVCKFANALRSQGVRRGDIVTIYMPMVPEAAVAMLACARIGAVHSVVFGGFSPDSIASRVIDGKSKIVITSDEGMRGGRAIPLKRNIDDALKHPDVTSVEKVIVLKRTGGKIDWVEGRDVWWHSLVETASEHCAVEEMGAEDPLFLLYTSGSTGNPKGVLHTTGGYMVYASMTHEYVFDYKPGEIYWCTADVGWITGHSYMVYGPLANGATVLIHEGVPNHPSPARLGEMIDRHKVNILYTAPTLIRALMAEGKQHFDKYNGSSLRIMGSVGEPINPEAWRWYHEVIGHEHCPIVDTWWQTETGGILITPLPGATDTKPGSATRPFFGVQPALVDNMGNILEGATEGNLVLLDSWPGQMRTVYGDHERFVLTYFKTFRGMYFTGDGARRDEDGYYWITGRVDDVINVSGHRLGTAEVESALVSHELVAEAAVVGYPHDIKGQGIYAYVTLTRGTEESEELRQELRQWVRKEIGALATPDLIQWATGLPKTRSGKIMRRFLRKIAANEVTNLGDASTLADPAVIETLIETRLNRNE.

CoA-binding positions include 191-194, threonine 311, and asparagine 335; that span reads RGGR. ATP-binding positions include 387–389, 411–416, aspartate 500, and arginine 515; these read GEP and DTWWQT. A CoA-binding site is contributed by serine 523. Residue arginine 526 participates in ATP binding. Valine 537, histidine 539, and valine 542 together coordinate Mg(2+). Arginine 584 provides a ligand contact to CoA. Position 609 is an N6-acetyllysine (lysine 609).

This sequence belongs to the ATP-dependent AMP-binding enzyme family. Mg(2+) is required as a cofactor. Acetylated. Deacetylation by the SIR2-homolog deacetylase activates the enzyme.

The enzyme catalyses acetate + ATP + CoA = acetyl-CoA + AMP + diphosphate. In terms of biological role, catalyzes the conversion of acetate into acetyl-CoA (AcCoA), an essential intermediate at the junction of anabolic and catabolic pathways. AcsA undergoes a two-step reaction. In the first half reaction, AcsA combines acetate with ATP to form acetyl-adenylate (AcAMP) intermediate. In the second half reaction, it can then transfer the acetyl group from AcAMP to the sulfhydryl group of CoA, forming the product AcCoA. The polypeptide is Acetyl-coenzyme A synthetase (Shewanella oneidensis (strain ATCC 700550 / JCM 31522 / CIP 106686 / LMG 19005 / NCIMB 14063 / MR-1)).